Consider the following 407-residue polypeptide: Dephospho-CoA kinase (407 aa).

The region spanning 3 to 201 (RIGLTGGIGA…ERIVPFAHNL (199 aa)) is the DPCK domain. 11–16 (GAGKSA) is a binding site for ATP. A UPF0157 region spans residues 196–407 (PFAHNLSTRQ…DWADSTGWKP (212 aa)).

This sequence in the N-terminal section; belongs to the CoaE family. In the C-terminal section; belongs to the UPF0157 (GrpB) family.

Its subcellular location is the cytoplasm. The enzyme catalyses 3'-dephospho-CoA + ATP = ADP + CoA + H(+). It participates in cofactor biosynthesis; coenzyme A biosynthesis; CoA from (R)-pantothenate: step 5/5. Its function is as follows. Catalyzes the phosphorylation of the 3'-hydroxyl group of dephosphocoenzyme A to form coenzyme A. This is Dephospho-CoA kinase from Mycolicibacterium paratuberculosis (strain ATCC BAA-968 / K-10) (Mycobacterium paratuberculosis).